The following is a 367-amino-acid chain: MSDNSQKKVIVGMSGGVDSSVTAYLLQQQGYQVAGLFMKNWEEDDDEEYCSAATDLADAQAVCDKLGIELHTVNFAAEYWDNVFELFLEEYKAGRTPNPDILCNKEIKFKAFLEFAAEDLGADFIATGHYVRRQDVDSKSRLLRGVDGNKDQSYFLYTLSHEQVAQSLFPVGELEKPEVRRIAEQLELVTAKKKDSTGICFIGERKFRDFLGRYLPAQPGPIVSVDGQTVGEHQGLMYHTLGQRKGLGIGGMKDSSEDPWYVVDKDVANNVLVVAQGHEHPRLMSVGLIAQQLHWVDRLPLSGPFRCTVKTRYRQQDIPCTVTPLDEQRIEVRFDEPVAAVTPGQSAVFYQDEICLGGGIIEQRLQE.

ATP is bound by residues 12 to 19 (GMSGGVDS) and Met-38. The segment at 98–100 (NPD) is interaction with target base in tRNA. Cys-103 acts as the Nucleophile in catalysis. Cys-103 and Cys-200 are joined by a disulfide. Position 128 (Gly-128) interacts with ATP. The tract at residues 150–152 (KDQ) is interaction with tRNA. The active-site Cysteine persulfide intermediate is the Cys-200. The segment at 312-313 (RY) is interaction with tRNA.

Belongs to the MnmA/TRMU family. As to quaternary structure, interacts with TusE.

It is found in the cytoplasm. The enzyme catalyses S-sulfanyl-L-cysteinyl-[protein] + uridine(34) in tRNA + AH2 + ATP = 2-thiouridine(34) in tRNA + L-cysteinyl-[protein] + A + AMP + diphosphate + H(+). Functionally, catalyzes the 2-thiolation of uridine at the wobble position (U34) of tRNA(Lys), tRNA(Glu) and tRNA(Gln), leading to the formation of s(2)U34, the first step of tRNA-mnm(5)s(2)U34 synthesis. Sulfur is provided by IscS, via a sulfur-relay system. Binds ATP and its substrate tRNAs. The chain is tRNA-specific 2-thiouridylase MnmA from Serratia proteamaculans (strain 568).